A 176-amino-acid chain; its full sequence is Transcription factor 21 (176 aa).

Residues 1-84 (MSTGSISDVD…QVQRNAANAR (84 aa)) are disordered. Positions 31-44 (GTSNESTEDSSNCE) are enriched in polar residues. One can recognise a bHLH domain in the interval 76–128 (VQRNAANARERARMRVLSKAFSRLKTTLPWVPPDTKLSKLDTLRLASSYIAHL).

Efficient DNA binding requires dimerization with another bHLH protein. As to expression, expressed in the cranial paraxial mesoderm from 20 hpf and subsequently becomes restricted to the pharyngeal mesoderm that will form the muscle. Expression in the proepicardial organ is first seen at 40hpf in a cluster of cells between the myocardium and yolk. Also expressed in the developing arches. Expression begins to surround the heart by day 3 of development, and by 96 hpf, expression is restricted to the outer epicardial layer surrounding the myocardium.

The protein resides in the nucleus. Functionally, involved in epithelial-mesenchymal interactions in kidney and lung morphogenesis that include epithelial differentiation and branching morphogenesis. The polypeptide is Transcription factor 21 (Danio rerio (Zebrafish)).